The chain runs to 250 residues: Probable transcriptional regulatory protein Nther_1800 (250 aa).

It belongs to the TACO1 family.

Its subcellular location is the cytoplasm. In Natranaerobius thermophilus (strain ATCC BAA-1301 / DSM 18059 / JW/NM-WN-LF), this protein is Probable transcriptional regulatory protein Nther_1800.